Consider the following 805-residue polypeptide: Sucrose synthase (805 aa).

Positions 275–752 (MVFNVVILSP…GLKRIEEKYT (478 aa)) are GT-B glycosyltransferase.

The protein belongs to the glycosyltransferase 1 family. Plant sucrose synthase subfamily. In terms of tissue distribution, expression is at least 10-fold higher in tubers compared to photosynthetically active tissues.

The enzyme catalyses an NDP-alpha-D-glucose + D-fructose = a ribonucleoside 5'-diphosphate + sucrose + H(+). Its function is as follows. Sucrose-cleaving enzyme that provides UDP-glucose and fructose for various metabolic pathways. This chain is Sucrose synthase, found in Solanum tuberosum (Potato).